Consider the following 40-residue polypeptide: Alpha-conotoxin-like Qc1.1c (40 aa).

The propeptide occupies 1 to 19 (SDGRNTAANDKASNLMALR). 2 cysteine pairs are disulfide-bonded: Cys-22–Cys-28 and Cys-23–Cys-36. The segment at 24–26 (PNP) is lacks the Ser-Xaa-Pro motif that is crucial for potent interaction with nAChR.

This sequence belongs to the conotoxin A superfamily. As to expression, expressed by the venom duct.

It is found in the secreted. Its function is as follows. Alpha-conotoxins act on postsynaptic membranes, they bind to the nicotinic acetylcholine receptors (nAChR) and thus inhibit them. Has possibly a distinct nAChR binding mode from other alpha-conotoxins, due to a different three residue motif (lacks the Ser-Xaa-Pro motif). In Conus quercinus (Oak cone), this protein is Alpha-conotoxin-like Qc1.1c.